Reading from the N-terminus, the 249-residue chain is Probable transcriptional regulatory protein MXAN_4974 (249 aa).

It belongs to the TACO1 family.

It localises to the cytoplasm. The sequence is that of Probable transcriptional regulatory protein MXAN_4974 from Myxococcus xanthus (strain DK1622).